Consider the following 180-residue polypeptide: Putative manganese efflux pump MntP (180 aa).

6 helical membrane passes run 1–21 (MLSV…ISIT), 34–54 (ILWY…IGYV), 63–83 (ISTY…LNMI), 103–123 (VTLL…TFAI), 129–149 (VIPC…GIFI), and 160–180 (KFQI…LLGF).

It belongs to the MntP (TC 9.B.29) family.

The protein localises to the cell membrane. Probably functions as a manganese efflux pump. The protein is Putative manganese efflux pump MntP of Methanosphaera stadtmanae (strain ATCC 43021 / DSM 3091 / JCM 11832 / MCB-3).